The sequence spans 176 residues: Dual-action ribosomal maturation protein DarP (176 aa).

It belongs to the DarP family.

It localises to the cytoplasm. Functionally, member of a network of 50S ribosomal subunit biogenesis factors which assembles along the 30S-50S interface, preventing incorrect 23S rRNA structures from forming. Promotes peptidyl transferase center (PTC) maturation. This Actinobacillus pleuropneumoniae serotype 5b (strain L20) protein is Dual-action ribosomal maturation protein DarP.